Here is a 388-residue protein sequence, read N- to C-terminus: Protein DVU_0534 (388 aa).

10 consecutive transmembrane segments (helical) span residues 10–31 (LMTPGNIITGIILVMGLVLTVL), 57–78 (LLCGVALAAGGYVTSASCYLFG), 89–106 (AITTAFLGYFFVVVALNY), 130–144 (EVGLCVATYLTVLFV), 166–191 (LTLVLTIFGVVLSTLHQSSLGALFLI), 199–222 (LWYSSFLPVFFFISSMVAGLSMVI), 254–265 (AASFVLAGYFMI), 291–306 (MLGFVALPSFLYALGV), 316–328 (FASVLGVLGIVMN), and 354–368 (IGISVFIVTSIITVY).

The protein belongs to the NrfD family.

Its subcellular location is the cell membrane. HMWC (high-molecular-weight cytochrome c), ORF2, ORF3, ORF4, ORF5 and ORF6 in the HMC operon form a transmembrane protein complex that allows electron flow from the periplasmic hydrogenase to the cytoplasmic enzymes that catalyze reduction of sulfates. This chain is Protein DVU_0534, found in Nitratidesulfovibrio vulgaris (strain ATCC 29579 / DSM 644 / CCUG 34227 / NCIMB 8303 / VKM B-1760 / Hildenborough) (Desulfovibrio vulgaris).